The primary structure comprises 780 residues: Phosphoenolpyruvate synthase (780 aa).

His409 acts as the Tele-phosphohistidine intermediate in catalysis. Substrate is bound by residues Arg499, Arg566, Glu668, Gly689, Ser690, Asn691, and Asp692. Glu668 serves as a coordination point for Mg(2+). Asp692 is a binding site for Mg(2+).

Belongs to the PEP-utilizing enzyme family. Mg(2+) is required as a cofactor.

It catalyses the reaction pyruvate + ATP + H2O = phosphoenolpyruvate + AMP + phosphate + 2 H(+). It functions in the pathway carbohydrate biosynthesis; gluconeogenesis. Catalyzes the phosphorylation of pyruvate to phosphoenolpyruvate. The chain is Phosphoenolpyruvate synthase (ppsA) from Deinococcus radiodurans (strain ATCC 13939 / DSM 20539 / JCM 16871 / CCUG 27074 / LMG 4051 / NBRC 15346 / NCIMB 9279 / VKM B-1422 / R1).